The following is a 279-amino-acid chain: Cholesterol 25-hydroxylase-like protein 2 (279 aa).

N-linked (GlcNAc...) asparagine glycosylation is found at asparagine 6 and asparagine 13. The next 3 membrane-spanning stretches occupy residues 36 to 56 (LFPV…YTVL), 86 to 106 (LALT…AQWL), and 120 to 140 (LTAF…QYYL). One can recognise a Fatty acid hydroxylase domain in the interval 128 to 262 (VGCTVVFDFQ…FAHWDWLGGT (135 aa)). The Histidine box-1 motif lies at 141–145 (WHLLH). Positions 156 to 160 (HALHH) match the Histidine box-2 motif. A run of 2 transmembrane segments spans residues 165 to 185 (TFSL…GFWT) and 189 to 209 (PLLL…NIWV). The Histidine box-3 signature appears at 237–243 (RHDAHHQ).

It belongs to the sterol desaturase family. Fe cation is required as a cofactor.

Its subcellular location is the endoplasmic reticulum membrane. Functionally, may catalyze the formation of 25-hydroxycholesterol from cholesterol. This chain is Cholesterol 25-hydroxylase-like protein 2, found in Danio rerio (Zebrafish).